The primary structure comprises 134 residues: Small ribosomal subunit protein uS11 (134 aa).

The protein belongs to the universal ribosomal protein uS11 family. Part of the 30S ribosomal subunit. Interacts with proteins S7 and S18. Binds to IF-3.

Its function is as follows. Located on the platform of the 30S subunit, it bridges several disparate RNA helices of the 16S rRNA. Forms part of the Shine-Dalgarno cleft in the 70S ribosome. The chain is Small ribosomal subunit protein uS11 from Janthinobacterium sp. (strain Marseille) (Minibacterium massiliensis).